Reading from the N-terminus, the 476-residue chain is Deoxyguanosinetriphosphate triphosphohydrolase-like protein 2 (476 aa).

Positions 1 to 20 (MYTDADRSREVVPEKDGHDK) are disordered. An HD domain is found at 60 to 233 (RLTHSLEVAQ…MDLADDIAYS (174 aa)).

It belongs to the dGTPase family. Type 2 subfamily.

The chain is Deoxyguanosinetriphosphate triphosphohydrolase-like protein 2 from Mesorhizobium japonicum (strain LMG 29417 / CECT 9101 / MAFF 303099) (Mesorhizobium loti (strain MAFF 303099)).